Here is a 397-residue protein sequence, read N- to C-terminus: Glutamyl-tRNA reductase (397 aa).

Residues 47–50 (TCGR), serine 98, 103–105 (ETD), and glutamine 109 contribute to the substrate site. Cysteine 48 functions as the Nucleophile in the catalytic mechanism. NADP(+) is bound at residue 177-182 (GAGAVG).

This sequence belongs to the glutamyl-tRNA reductase family. As to quaternary structure, homodimer.

The enzyme catalyses (S)-4-amino-5-oxopentanoate + tRNA(Glu) + NADP(+) = L-glutamyl-tRNA(Glu) + NADPH + H(+). It functions in the pathway porphyrin-containing compound metabolism; protoporphyrin-IX biosynthesis; 5-aminolevulinate from L-glutamyl-tRNA(Glu): step 1/2. Catalyzes the NADPH-dependent reduction of glutamyl-tRNA(Glu) to glutamate 1-semialdehyde (GSA). The polypeptide is Glutamyl-tRNA reductase (Pyrobaculum aerophilum (strain ATCC 51768 / DSM 7523 / JCM 9630 / CIP 104966 / NBRC 100827 / IM2)).